A 72-amino-acid polypeptide reads, in one-letter code: DNA gyrase inhibitor YacG (72 aa).

Residues Cys14, Cys17, Cys33, and Cys37 each coordinate Zn(2+).

This sequence belongs to the DNA gyrase inhibitor YacG family. As to quaternary structure, interacts with GyrB. Requires Zn(2+) as cofactor.

Its function is as follows. Inhibits all the catalytic activities of DNA gyrase by preventing its interaction with DNA. Acts by binding directly to the C-terminal domain of GyrB, which probably disrupts DNA binding by the gyrase. The polypeptide is DNA gyrase inhibitor YacG (Mannheimia succiniciproducens (strain KCTC 0769BP / MBEL55E)).